Consider the following 29-residue polypeptide: Cytolysin Oshem 1 (29 aa).

It is found in the secreted. The protein resides in the nematocyst. It localises to the target cell membrane. Functionally, cytolysin that shows moderate hemolysis and moderate myonecrosis. In Olindias sambaquiensis (Hydromedusa), this protein is Cytolysin Oshem 1.